The primary structure comprises 1527 residues: DNA-directed RNA polymerase subunit beta'' (1527 aa).

Cys220, Cys296, Cys303, and Cys306 together coordinate Zn(2+). Composition is skewed to basic and acidic residues over residues 644–661 and 671–681; these read RTQE…RTRE and PENKYRTREGE. Disordered regions lie at residues 644–681 and 712–793; these read RTQE…REGE and YRTL…KKEG. Composition is skewed to acidic residues over residues 737-755 and 763-786; these read GEYE…SSED and TLEE…PEED.

The protein belongs to the RNA polymerase beta' chain family. RpoC2 subfamily. In plastids the minimal PEP RNA polymerase catalytic core is composed of four subunits: alpha, beta, beta', and beta''. When a (nuclear-encoded) sigma factor is associated with the core the holoenzyme is formed, which can initiate transcription. Requires Zn(2+) as cofactor.

The protein resides in the plastid. It is found in the chloroplast. It carries out the reaction RNA(n) + a ribonucleoside 5'-triphosphate = RNA(n+1) + diphosphate. In terms of biological role, DNA-dependent RNA polymerase catalyzes the transcription of DNA into RNA using the four ribonucleoside triphosphates as substrates. This Zea mays (Maize) protein is DNA-directed RNA polymerase subunit beta''.